The following is a 470-amino-acid chain: Argininosuccinate lyase (470 aa).

This sequence belongs to the lyase 1 family. Argininosuccinate lyase subfamily.

Its subcellular location is the cytoplasm. The enzyme catalyses 2-(N(omega)-L-arginino)succinate = fumarate + L-arginine. It functions in the pathway amino-acid biosynthesis; L-arginine biosynthesis; L-arginine from L-ornithine and carbamoyl phosphate: step 3/3. The protein is Argininosuccinate lyase of Mycobacterium sp. (strain MCS).